The chain runs to 445 residues: ATP-dependent protease ATPase subunit HslU (445 aa).

ATP is bound by residues isoleucine 18, 60 to 65 (GVGKTE), aspartate 258, glutamate 323, and arginine 395.

This sequence belongs to the ClpX chaperone family. HslU subfamily. In terms of assembly, a double ring-shaped homohexamer of HslV is capped on each side by a ring-shaped HslU homohexamer. The assembly of the HslU/HslV complex is dependent on binding of ATP.

The protein localises to the cytoplasm. ATPase subunit of a proteasome-like degradation complex; this subunit has chaperone activity. The binding of ATP and its subsequent hydrolysis by HslU are essential for unfolding of protein substrates subsequently hydrolyzed by HslV. HslU recognizes the N-terminal part of its protein substrates and unfolds these before they are guided to HslV for hydrolysis. In Syntrophotalea carbinolica (strain DSM 2380 / NBRC 103641 / GraBd1) (Pelobacter carbinolicus), this protein is ATP-dependent protease ATPase subunit HslU.